Here is a 997-residue protein sequence, read N- to C-terminus: Autophagy-related protein 9 (997 aa).

Residues 1–318 are Cytoplasmic-facing; that stretch reads MERDEYQLPN…DVYNYYLGNG (318 aa). A Phosphoserine; by ATG1 modification is found at Ser-19. The span at 29–39 shows a compositional bias: polar residues; that stretch reads VNPSLNSQEMS. The disordered stretch occupies residues 29–88; it reads VNPSLNSQEMSNFPLPDIERGSSLLHSTNDSREDVDENDLRVPESDQGTSTEEEDEVDEE. The segment covering 79-88 has biased composition (acidic residues); that stretch reads TEEEDEVDEE. Glycyl lysine isopeptide (Lys-Gly) (interchain with G-Cter in ubiquitin) cross-links involve residues Lys-113 and Lys-121. A Phosphoserine modification is found at Ser-122. 2 disordered regions span residues 128-159 and 213-235; these read VEGS…DGFD and IHHD…QKHG. Lys-138 participates in a covalent cross-link: Glycyl lysine isopeptide (Lys-Gly) (interchain with G-Cter in ubiquitin). Phosphoserine occurs at positions 143 and 144. Over residues 144 to 159 the composition is skewed to acidic residues; it reads SEEEEDNEFINNDGFD. Residues 221–233 are compositionally biased toward polar residues; that stretch reads ANNGPRNINGNQK. The helical transmembrane segment at 319-339 threads the bilayer; it reads FYCIILEKILNICTLLFVVFV. Over 340–376 the chain is Lumenal; sequence STYMGHCVDYSKLPTSHRVSDIIIDKCYSNSITGFTK. A helical transmembrane segment spans residues 377–397; that stretch reads FFLWMFYFFVILKIVQLYFDV. Residues 398–538 are Cytoplasmic-facing; that stretch reads QKLSELQNFY…EELQKRFMLA (141 aa). The stretch at 539-559 is an intramembrane region; sequence GFLNIILAPFLVTYFVLLYFF. Residues 560–620 lie on the Cytoplasmic side of the membrane; the sequence is RYFNEYKTSP…DQFPKEKTNL (61 aa). Residues 621-641 form a helical membrane-spanning segment; that stretch reads FLKFVSFICGSFVAILAFLTV. Topologically, residues 642–656 are lumenal; sequence FDPENFLNFEITSDR. Ser-657 carries the phosphoserine; by ATG1 modification. Residues 657–677 form a helical membrane-spanning segment; sequence SVIFYITILGAIWSVSRNTIT. Residues 678–723 are Cytoplasmic-facing; sequence QEYHVFDPEETLKELYEYTHYLPKEWEGRYHKEEIKLEFCKLYNLR. A Glycyl lysine isopeptide (Lys-Gly) (interchain with G-Cter in ubiquitin) cross-link involves residue Lys-701. The stretch at 724–744 is an intramembrane region; it reads IVILLRELTSLMITPFVLWFS. Residues 745 to 997 lie on the Cytoplasmic side of the membrane; the sequence is LPSSAGRIVD…EYYKKSDVGR (253 aa). Residues Ser-787 and Ser-792 each carry the phosphoserine modification. A Phosphothreonine modification is found at Thr-794. Ser-802 is subject to Phosphoserine; by ATG1. Thr-804 is modified (phosphothreonine; by ATG1). A phosphoserine; by ATG1 mark is found at Ser-831 and Ser-842. Ser-864 bears the Phosphoserine mark. Phosphoserine; by ATG1 occurs at positions 948 and 969.

This sequence belongs to the ATG9 family. In terms of assembly, homotrimer; forms a homotrimer with a central pore that forms a path between the two membrane leaflets. Interacts with ATG23 and ATG27 to form a cycling complex for trafficking to the PAS. Interacts (via N-terminus) with ATG11, required for recruitment of ATG9 to the PAS for the Cvt pathway during nutrient-rich conditions. Interacts (via N-terminus) with ATG17; required for recruitment to the PAS during autophagy and starved conditions. Interacts with ATG2 and ATG18; required for the retrieval of ATG9 from the PAS to the cytoplasmic pool. Interacts with ATG41. Interacts with the conserved oligomeric Golgi (COG) complex subunits COG3 and COG4. Interacts with TRS85. In terms of processing, phosphorylated by ATG1; phosphorylation is required for autophagy and cytoplasm to vacuole transport (Cvt) vesicle formation. Phosphorylation by ATG1 regulates ATG18 interaction and preautophagosome elongation. Phosphorylation at Ser-122 is required for selective autophagy by regulating anterograde trafficking and interaction with ATG23 and ATG27. Phosphorylation at Ser-122 prevents ubiquitination by the SCF(MET30) complex. Ubiquitinated by the SCF(MET30) complex in normal conditions, leading to its degradation by the proteasome, thereby preventing inappropriate induction of autophagy. Ubiquitination by the SCF(MET30) complex is prevented by phosphorylation at Ser-122.

The protein localises to the preautophagosomal structure membrane. Its subcellular location is the cytoplasmic vesicle membrane. It localises to the golgi apparatus membrane. It is found in the endoplasmic reticulum membrane. The protein resides in the mitochondrion membrane. The catalysed reaction is a 1,2-diacyl-sn-glycero-3-phosphocholine(in) = a 1,2-diacyl-sn-glycero-3-phosphocholine(out). The enzyme catalyses a 1,2-diacyl-sn-glycero-3-phospho-L-serine(in) = a 1,2-diacyl-sn-glycero-3-phospho-L-serine(out). It carries out the reaction a 1,2-diacyl-sn-glycero-3-phosphoethanolamine(in) = a 1,2-diacyl-sn-glycero-3-phosphoethanolamine(out). It catalyses the reaction a 1,2-diacyl-sn-glycero-3-phospho-(1D-myo-inositol-3-phosphate)(in) = a 1,2-diacyl-sn-glycero-3-phospho-(1D-myo-inositol-3-phosphate)(out). Phospholipid scramblase involved in autophagy and cytoplasm to vacuole transport (Cvt) vesicle formation. Cycles between the preautophagosomal structure/phagophore assembly site (PAS) and the cytoplasmic vesicle pool and supplies membrane for the growing autophagosome. Lipid scramblase activity plays a key role in preautophagosomal structure/phagophore assembly by distributing the phospholipids that arrive through ATG2 from the cytoplasmic to the luminal leaflet of the bilayer, thereby driving autophagosomal membrane expansion. Required for mitophagy. Also involved in endoplasmic reticulum-specific autophagic process and is essential for the survival of cells subjected to severe ER stress. Recruits vesicle-tethering proteins TRS85 and YPT1 to the autophagosome formation site. Also recruits ATG23 and ATG8 to the PAS. The chain is Autophagy-related protein 9 from Saccharomyces cerevisiae (strain ATCC 204508 / S288c) (Baker's yeast).